Here is a 116-residue protein sequence, read N- to C-terminus: Ribonuclease P protein component (116 aa).

The protein belongs to the RnpA family. In terms of assembly, consists of a catalytic RNA component (M1 or rnpB) and a protein subunit.

It carries out the reaction Endonucleolytic cleavage of RNA, removing 5'-extranucleotides from tRNA precursor.. Its function is as follows. RNaseP catalyzes the removal of the 5'-leader sequence from pre-tRNA to produce the mature 5'-terminus. It can also cleave other RNA substrates such as 4.5S RNA. The protein component plays an auxiliary but essential role in vivo by binding to the 5'-leader sequence and broadening the substrate specificity of the ribozyme. In Lachnoclostridium phytofermentans (strain ATCC 700394 / DSM 18823 / ISDg) (Clostridium phytofermentans), this protein is Ribonuclease P protein component.